Reading from the N-terminus, the 159-residue chain is Protein Smg homolog (159 aa).

The protein belongs to the Smg family.

The sequence is that of Protein Smg homolog from Shewanella amazonensis (strain ATCC BAA-1098 / SB2B).